The chain runs to 419 residues: Potassium/proton antiporter CemA (419 aa).

The next 4 helical transmembrane spans lie at 196-216, 297-317, 344-364, and 371-391; these read LASIQYGFFLLLLPWIVTLLF, IIELITDFIGIFTITVILCIA, ILLITDLCIGFHSPHGWEVLI, and FGFVPNQYITSFFVSTFPVVL.

The protein belongs to the CemA family.

It localises to the plastid. The protein resides in the chloroplast inner membrane. It catalyses the reaction K(+)(in) + H(+)(out) = K(+)(out) + H(+)(in). In terms of biological role, contributes to K(+)/H(+) antiport activity by supporting proton efflux to control proton extrusion and homeostasis in chloroplasts in a light-dependent manner to modulate photosynthesis. Prevents excessive induction of non-photochemical quenching (NPQ) under continuous-light conditions. Indirectly promotes efficient inorganic carbon uptake into chloroplasts. The sequence is that of Potassium/proton antiporter CemA from Chara vulgaris (Common stonewort).